The sequence spans 462 residues: Dipeptidyl peptidase 1 (462 aa).

Positions 1 to 24 (MGPWTHSLRAVLLLVLLGVCTVRS) are cleaved as a signal peptide. Residues N29 and N53 are each glycosylated (N-linked (GlcNAc...) asparagine). Intrachain disulfides connect C30–C118, C54–C136, C254–C297, C290–C330, and C320–C336. Positions 135 to 230 (ACFVGKKVES…DEIQQQILNL (96 aa)) are excised as a propeptide. Residue C257 is part of the active site. N-linked (GlcNAc...) asparagine glycosylation is present at N275. Positions 301 and 303 each coordinate chloride. Y346 contacts chloride. Catalysis depends on residues H404 and N426.

Belongs to the peptidase C1 family. In terms of assembly, tetramer of heterotrimers consisting of exclusion domain, heavy- and light chains. Requires chloride as cofactor. In terms of tissue distribution, broadly distributed, but higher levels found in lung, liver, kidney and spleen. Lower levels found in testis and brain.

It localises to the lysosome. It carries out the reaction Release of an N-terminal dipeptide, Xaa-Yaa-|-Zaa-, except when Xaa is Arg or Lys, or Yaa or Zaa is Pro.. Thiol protease. Has dipeptidylpeptidase activity. Active against a broad range of dipeptide substrates composed of both polar and hydrophobic amino acids. Proline cannot occupy the P1 position and arginine cannot occupy the P2 position of the substrate. Can act as both an exopeptidase and endopeptidase. Activates serine proteases such as elastase, cathepsin G and granzymes A and B. In Mus musculus (Mouse), this protein is Dipeptidyl peptidase 1 (Ctsc).